The sequence spans 528 residues: Tyrosine--tRNA ligase, cytoplasmic (528 aa).

Tyrosine 39 serves as a coordination point for L-tyrosine. The 'HIGH' region signature appears at 44 to 52 (TTGKPHVAY). Tyrosine 166, glutamine 170, aspartate 173, and glutamine 188 together coordinate L-tyrosine. The 'KMSKS' region signature appears at 222–226 (KMSSS). The short motif at 242 to 247 (KKKLKK) is the Nuclear localization signal element. Residues 335-364 (KLSNDAYPGASKQKTVPKGSTKNSGPEEID) form a disordered region. Residues 346 to 358 (KQKTVPKGSTKNS) show a composition bias toward polar residues. A tRNA-binding domain is found at 364-468 (DPSLLDLRVG…TGSAPGERIY (105 aa)).

This sequence belongs to the class-I aminoacyl-tRNA synthetase family. Homodimer.

The protein localises to the cytoplasm. It localises to the nucleus. The enzyme catalyses tRNA(Tyr) + L-tyrosine + ATP = L-tyrosyl-tRNA(Tyr) + AMP + diphosphate + H(+). Functionally, catalyzes the attachment of tyrosine to tRNA(Tyr) in a two-step reaction: tyrosine is first activated by ATP to form Tyr-AMP and then transferred to the acceptor end of tRNA(Tyr). The sequence is that of Tyrosine--tRNA ligase, cytoplasmic (yars1) from Xenopus tropicalis (Western clawed frog).